The primary structure comprises 86 residues: U15-lycotoxin-Ls1d (86 aa).

Positions 1–20 are cleaved as a signal peptide; it reads MNSKIFAVLLLLALLSCVLS. One can recognise a WAP domain in the interval 21-66; the sequence is DQYCPKSSITACKKMNIRNDCCKDDDCTGGSWCCATPCGNFCKYPT. 5 disulfide bridges follow: Cys24-Cys54, Cys32-Cys58, Cys41-Cys53, Cys42-Cys80, and Cys47-Cys62.

The protein belongs to the venom protein 11 family. 01 (wap-1) subfamily. In terms of processing, contains 5 disulfide bonds. In terms of tissue distribution, expressed by the venom gland.

It is found in the secreted. Its function is as follows. Has antibacterial activity. This is U15-lycotoxin-Ls1d from Lycosa singoriensis (Wolf spider).